The sequence spans 115 residues: Large ribosomal subunit protein bL19 (115 aa).

This sequence belongs to the bacterial ribosomal protein bL19 family.

This protein is located at the 30S-50S ribosomal subunit interface and may play a role in the structure and function of the aminoacyl-tRNA binding site. The polypeptide is Large ribosomal subunit protein bL19 (Alkaliphilus oremlandii (strain OhILAs) (Clostridium oremlandii (strain OhILAs))).